We begin with the raw amino-acid sequence, 376 residues long: Succinyl-diaminopimelate desuccinylase (376 aa).

His-67 contacts Zn(2+). The active site involves Asp-69. Asp-100 lines the Zn(2+) pocket. Glu-134 serves as the catalytic Proton acceptor. Residues Glu-135, Glu-163, and His-349 each contribute to the Zn(2+) site.

The protein belongs to the peptidase M20A family. DapE subfamily. As to quaternary structure, homodimer. The cofactor is Zn(2+). Co(2+) is required as a cofactor.

It carries out the reaction N-succinyl-(2S,6S)-2,6-diaminopimelate + H2O = (2S,6S)-2,6-diaminopimelate + succinate. The protein operates within amino-acid biosynthesis; L-lysine biosynthesis via DAP pathway; LL-2,6-diaminopimelate from (S)-tetrahydrodipicolinate (succinylase route): step 3/3. Catalyzes the hydrolysis of N-succinyl-L,L-diaminopimelic acid (SDAP), forming succinate and LL-2,6-diaminopimelate (DAP), an intermediate involved in the bacterial biosynthesis of lysine and meso-diaminopimelic acid, an essential component of bacterial cell walls. The sequence is that of Succinyl-diaminopimelate desuccinylase from Xanthomonas campestris pv. campestris (strain 8004).